The following is a 433-amino-acid chain: F-box only protein 15 (433 aa).

Residues 1–41 form the F-box domain; it reads MPSEILVKILSYLDAVTLVCIGCVSRRFYHLADDNLIWVRK.

As to quaternary structure, directly interacts with SKP1 and CUL1. As to expression, expressed in testis.

Its function is as follows. Substrate-recognition component of the SCF (SKP1-CUL1-F-box protein)-type E3 ubiquitin ligase complex. The protein is F-box only protein 15 (Fbxo15) of Mus musculus (Mouse).